Reading from the N-terminus, the 699-residue chain is Probable xyloglucan glycosyltransferase 12 (699 aa).

2 helical membrane passes run 126–146 (CLKVFLWLSLILLGFEIAAYF) and 194–214 (IVLFLVQSLDRLILCLGCFWI). Residue Asp-280 is part of the active site. Asp-339 and Asp-341 together coordinate substrate. Asp-433 is an active-site residue. Transmembrane regions (helical) follow at residues 511 to 531 (LILPFYSFTLFCIILPMTMFV) and 536 to 556 (LPAWVVCYIPATMSFLNILPA). Positions 616 to 646 (EKTTKHQRGVSAPETEAEKKAEKTKRKKKKH) are disordered. Residues Lys-617 and Lys-620 each participate in a glycyl lysine isopeptide (Lys-Gly) (interchain with G-Cter in ubiquitin) cross-link. The residue at position 626 (Ser-626) is a Phosphoserine. The segment covering 637–646 (EKTKRKKKKH) has biased composition (basic residues). Transmembrane regions (helical) follow at residues 649-668 (IYMKELSLAFLLLTAATRSL) and 674-694 (IHFYFLLFQGISFLLVGLDLI).

This sequence belongs to the glycosyltransferase 2 family. Plant cellulose synthase-like C subfamily. Homodimer. As to expression, mainly expressed in roots, flowers and seeds, and, at very low levels, in seedlings, leaves and stems.

It is found in the golgi apparatus membrane. Functionally, probable beta-1,4-glucan synthase rather involved in the synthesis of the xyloglucan backbone than cellulose. Seems to work simultaneously with xyloglucan 6-xylosyltransferase. Xyloglucan is a noncellulosic polysaccharides of plant cell wall and consists of a glucan backbone substituted by xylose, galactose and fucose. The sequence is that of Probable xyloglucan glycosyltransferase 12 from Arabidopsis thaliana (Mouse-ear cress).